The primary structure comprises 107 residues: Replication initiation control protein YabA (107 aa).

Zn(2+) is bound by residues His81, Cys83, Cys97, and Cys100.

This sequence belongs to the YabA family. As to quaternary structure, homotetramer. Interacts with both DnaA and DnaN, acting as a bridge between these two proteins. Requires Zn(2+) as cofactor.

It is found in the cytoplasm. Its subcellular location is the nucleoid. In terms of biological role, involved in control of chromosome replication initiation. Inhibits the cooperative binding of DnaA to the oriC region, thus negatively regulating initiation of chromosome replication. Inhibits the ability of DnaA-ATP to form a helix on DNA; does not disassemble preformed DnaA-DNA helices. Decreases the residence time of DnaA on the chromosome at its binding sites (oriC, replication forks and promoter-binding sites). Tethers DnaA to the replication machinery via the DNA polymerase beta sliding clamp subunit (dnaN). Associates with oriC and other DnaA targets on the chromosome in a DnaA-dependent manner. The chain is Replication initiation control protein YabA from Streptococcus equi subsp. equi (strain 4047).